The following is a 533-amino-acid chain: Tyrosine decarboxylase (533 aa).

The interval 1–22 is disordered; sequence MAPPSHCHTINGGAPRNGAIPE. Pyridoxal 5'-phosphate contacts are provided by threonine 281 and asparagine 336. An N6-(pyridoxal phosphate)lysine modification is found at lysine 339.

It belongs to the group II decarboxylase family. Requires pyridoxal 5'-phosphate as cofactor.

The enzyme catalyses L-tyrosine + H(+) = tyramine + CO2. Catalyzes the decarboxylation of L-tyrosine to tyramine, which can be converted to the hydroxycinnamic acid amides feruloyltyramine and 4-coumaroyltyramine. Possesses low tryptophan decarboxylase activity. This chain is Tyrosine decarboxylase, found in Oryza sativa subsp. japonica (Rice).